Reading from the N-terminus, the 301-residue chain is Glycine--tRNA ligase alpha subunit (301 aa).

This sequence belongs to the class-II aminoacyl-tRNA synthetase family. Tetramer of two alpha and two beta subunits.

The protein resides in the cytoplasm. The enzyme catalyses tRNA(Gly) + glycine + ATP = glycyl-tRNA(Gly) + AMP + diphosphate. In Shewanella oneidensis (strain ATCC 700550 / JCM 31522 / CIP 106686 / LMG 19005 / NCIMB 14063 / MR-1), this protein is Glycine--tRNA ligase alpha subunit.